The sequence spans 302 residues: 4-hydroxy-tetrahydrodipicolinate synthase (302 aa).

Position 55 (Thr-55) interacts with pyruvate. Residue Tyr-144 is the Proton donor/acceptor of the active site. Lys-172 serves as the catalytic Schiff-base intermediate with substrate. Val-214 contacts pyruvate.

It belongs to the DapA family. As to quaternary structure, homotetramer; dimer of dimers.

Its subcellular location is the cytoplasm. It carries out the reaction L-aspartate 4-semialdehyde + pyruvate = (2S,4S)-4-hydroxy-2,3,4,5-tetrahydrodipicolinate + H2O + H(+). The protein operates within amino-acid biosynthesis; L-lysine biosynthesis via DAP pathway; (S)-tetrahydrodipicolinate from L-aspartate: step 3/4. Its function is as follows. Catalyzes the condensation of (S)-aspartate-beta-semialdehyde [(S)-ASA] and pyruvate to 4-hydroxy-tetrahydrodipicolinate (HTPA). The sequence is that of 4-hydroxy-tetrahydrodipicolinate synthase from Synechococcus sp. (strain CC9902).